A 236-amino-acid polypeptide reads, in one-letter code: Pyridoxal phosphate homeostasis protein (236 aa).

Lysine 36 is modified (N6-(pyridoxal phosphate)lysine).

This sequence belongs to the pyridoxal phosphate-binding protein YggS/PROSC family.

Pyridoxal 5'-phosphate (PLP)-binding protein, which is involved in PLP homeostasis. The sequence is that of Pyridoxal phosphate homeostasis protein from Vibrio cholerae serotype O1 (strain ATCC 39315 / El Tor Inaba N16961).